A 357-amino-acid chain; its full sequence is DNA replication and repair protein RecF (357 aa).

30–37 (GANGSGKT) contributes to the ATP binding site.

The protein belongs to the RecF family.

The protein resides in the cytoplasm. Its function is as follows. The RecF protein is involved in DNA metabolism; it is required for DNA replication and normal SOS inducibility. RecF binds preferentially to single-stranded, linear DNA. It also seems to bind ATP. The sequence is that of DNA replication and repair protein RecF from Escherichia coli O6:K15:H31 (strain 536 / UPEC).